Reading from the N-terminus, the 207-residue chain is Large ribosomal subunit protein uL3c (207 aa).

The disordered stretch occupies residues 115 to 151 (IGKGFAGNQKRHNFSRGPMTHGSKNHRLPGSIGAGST).

Belongs to the universal ribosomal protein uL3 family. Part of the 50S ribosomal subunit.

The protein localises to the plastid. It is found in the chloroplast. In terms of biological role, one of the primary rRNA binding proteins, it binds directly near the 3'-end of the 23S rRNA, where it nucleates assembly of the 50S subunit. This Emiliania huxleyi (Coccolithophore) protein is Large ribosomal subunit protein uL3c (rpl3).